The chain runs to 126 residues: Aspartate 1-decarboxylase (126 aa).

Catalysis depends on serine 25, which acts as the Schiff-base intermediate with substrate; via pyruvic acid. The residue at position 25 (serine 25) is a Pyruvic acid (Ser). Threonine 57 is a substrate binding site. Tyrosine 58 serves as the catalytic Proton donor. 73–75 lines the substrate pocket; that stretch reads GAA.

The protein belongs to the PanD family. As to quaternary structure, heterooctamer of four alpha and four beta subunits. The cofactor is pyruvate. Post-translationally, is synthesized initially as an inactive proenzyme, which is activated by self-cleavage at a specific serine bond to produce a beta-subunit with a hydroxyl group at its C-terminus and an alpha-subunit with a pyruvoyl group at its N-terminus.

It is found in the cytoplasm. It carries out the reaction L-aspartate + H(+) = beta-alanine + CO2. It functions in the pathway cofactor biosynthesis; (R)-pantothenate biosynthesis; beta-alanine from L-aspartate: step 1/1. In terms of biological role, catalyzes the pyruvoyl-dependent decarboxylation of aspartate to produce beta-alanine. This Proteus mirabilis (strain HI4320) protein is Aspartate 1-decarboxylase.